We begin with the raw amino-acid sequence, 187 residues long: Early E3 20.6 kDa glycoprotein (187 aa).

N-linked (GlcNAc...) asparagine; by host glycans are attached at residues Asn30, Asn73, Asn117, Asn134, and Asn135.

The protein belongs to the adenoviridae E3_20 family.

This is Early E3 20.6 kDa glycoprotein from Human adenovirus B serotype 35 (HAdV-35).